Here is a 314-residue protein sequence, read N- to C-terminus: MESTKKQVSLELLPWLVVHTDGTVERLAGTEVCPPGLDPITGVFSKDIIIEPKTGLSARIYRPFSIQPGQKIPLMLYFHGGAFLISSTSFPSYHTSLNKIVNQANVIAVSVNYRLAPEHPLPTAYEDSWTALKNIQAINEPWINDYADLDSLFLVGDSAGANISHHLAFRAKQSDQTLKIKGIGMIHPYFWGTQPIGAEIKDEARKQMVDGWWEFVCPSEKGSDDPWINPFADGSPDLGGLGCERVMITVAEKDILNERGKMYYERLVKSEWKGKVEIMETKEKDHVFHIFEPDCDEAMEMVRCLALFINQVEA.

The Involved in the stabilization of the negatively charged intermediate by the formation of the oxyanion hole motif lies at 79–81; sequence HGG. Catalysis depends on residues Ser-158, Asp-254, and His-286.

The protein belongs to the 'GDXG' lipolytic enzyme family. Expressed in roots and flowers.

It catalyses the reaction a carboxylic ester + H2O = an alcohol + a carboxylate + H(+). In terms of biological role, carboxylesterase acting on esters with varying acyl chain length. The chain is Probable carboxylesterase 2 (CXE2) from Arabidopsis thaliana (Mouse-ear cress).